The chain runs to 156 residues: Ribosomal RNA large subunit methyltransferase H (156 aa).

S-adenosyl-L-methionine is bound by residues L73, G104, and 123–128; that span reads ISSMTL.

This sequence belongs to the RNA methyltransferase RlmH family. As to quaternary structure, homodimer.

The protein resides in the cytoplasm. The enzyme catalyses pseudouridine(1915) in 23S rRNA + S-adenosyl-L-methionine = N(3)-methylpseudouridine(1915) in 23S rRNA + S-adenosyl-L-homocysteine + H(+). Its function is as follows. Specifically methylates the pseudouridine at position 1915 (m3Psi1915) in 23S rRNA. This is Ribosomal RNA large subunit methyltransferase H from Burkholderia cenocepacia (strain ATCC BAA-245 / DSM 16553 / LMG 16656 / NCTC 13227 / J2315 / CF5610) (Burkholderia cepacia (strain J2315)).